The following is a 479-amino-acid chain: Altronate oxidoreductase (479 aa).

18–29 (IIQFGEGNFLRA) is an NAD(+) binding site.

Belongs to the mannitol dehydrogenase family. UxaB subfamily.

It catalyses the reaction D-altronate + NAD(+) = keto-D-tagaturonate + NADH + H(+). The protein operates within carbohydrate metabolism; pentose and glucuronate interconversion. The chain is Altronate oxidoreductase from Phocaeicola vulgatus (strain ATCC 8482 / DSM 1447 / JCM 5826 / CCUG 4940 / NBRC 14291 / NCTC 11154) (Bacteroides vulgatus).